The sequence spans 155 residues: 6,7-dimethyl-8-ribityllumazine synthase (155 aa).

5-amino-6-(D-ribitylamino)uracil-binding positions include phenylalanine 23, 57–59 (AFE), and 81–83 (AVI). 86 to 87 (ST) contacts (2S)-2-hydroxy-3-oxobutyl phosphate. Catalysis depends on histidine 89, which acts as the Proton donor. Position 114 (phenylalanine 114) interacts with 5-amino-6-(D-ribitylamino)uracil. Arginine 128 is a (2S)-2-hydroxy-3-oxobutyl phosphate binding site.

Belongs to the DMRL synthase family.

The catalysed reaction is (2S)-2-hydroxy-3-oxobutyl phosphate + 5-amino-6-(D-ribitylamino)uracil = 6,7-dimethyl-8-(1-D-ribityl)lumazine + phosphate + 2 H2O + H(+). It functions in the pathway cofactor biosynthesis; riboflavin biosynthesis; riboflavin from 2-hydroxy-3-oxobutyl phosphate and 5-amino-6-(D-ribitylamino)uracil: step 1/2. Its function is as follows. Catalyzes the formation of 6,7-dimethyl-8-ribityllumazine by condensation of 5-amino-6-(D-ribitylamino)uracil with 3,4-dihydroxy-2-butanone 4-phosphate. This is the penultimate step in the biosynthesis of riboflavin. The chain is 6,7-dimethyl-8-ribityllumazine synthase from Geobacter metallireducens (strain ATCC 53774 / DSM 7210 / GS-15).